A 724-amino-acid polypeptide reads, in one-letter code: Ribosomal RNA large subunit methyltransferase K/L (724 aa).

The 112-residue stretch at 42–153 (DAQRLVLWSR…KGRATLSVDL (112 aa)) folds into the THUMP domain.

It belongs to the methyltransferase superfamily. RlmKL family.

Its subcellular location is the cytoplasm. The enzyme catalyses guanosine(2445) in 23S rRNA + S-adenosyl-L-methionine = N(2)-methylguanosine(2445) in 23S rRNA + S-adenosyl-L-homocysteine + H(+). It carries out the reaction guanosine(2069) in 23S rRNA + S-adenosyl-L-methionine = N(2)-methylguanosine(2069) in 23S rRNA + S-adenosyl-L-homocysteine + H(+). Specifically methylates the guanine in position 2445 (m2G2445) and the guanine in position 2069 (m7G2069) of 23S rRNA. This chain is Ribosomal RNA large subunit methyltransferase K/L, found in Xylella fastidiosa (strain M12).